Reading from the N-terminus, the 398-residue chain is Sphingosine 1-phosphate receptor 5 (398 aa).

Residues 1–40 are Extracellular-facing; it reads MEPGLLRPAPVSEVIVLHYNYTGKLRGARYQPGAGLRADA. A glycan (N-linked (GlcNAc...) asparagine) is linked at Asn20. The helical transmembrane segment at 41-61 threads the bilayer; sequence VVCLAVCALIVLENLAVLVVL. Residues 62 to 70 lie on the Cytoplasmic side of the membrane; that stretch reads GRHPRFHAP. Residues 71 to 91 form a helical membrane-spanning segment; the sequence is MFLLLGSLTLSDLLAGAAYAA. Residues 92–111 are Extracellular-facing; it reads NILLSGPLTLRLSPALWFAR. A helical transmembrane segment spans residues 112-132; the sequence is EGGVFVALAASVLSLLAIALE. Residues 133–151 are Cytoplasmic-facing; that stretch reads RLLTMERRGPAPAARRGRT. Residues 152 to 172 form a helical membrane-spanning segment; sequence LALAAGAWGVSLLLGLLPALG. Residues 173–191 are Extracellular-facing; that stretch reads WNCLGRLEACSTVLPLYAK. A helical transmembrane segment spans residues 192-212; the sequence is AYVLFCVLAFVGILAAICGLY. Residues 213–252 lie on the Cytoplasmic side of the membrane; that stretch reads ARIYCQVRAKAQRLRARPGAGEGTSARARGTPRSLALLRT. Residues 253–273 form a helical membrane-spanning segment; sequence LSVVLVAFVACWGPLFLLLLL. The Extracellular segment spans residues 274 to 287; it reads DVACPARACPVLLQ. Residues 288–308 form a helical membrane-spanning segment; it reads ADPFLGLAMANSLLNPIIYTF. At 309 to 398 the chain is on the cytoplasmic side; that stretch reads TNRDLRHALL…QTLVPPPAAD (90 aa). Cys323 carries the S-palmitoyl cysteine lipid modification. The tract at residues 332–398 is disordered; it reads SGTSRSPGST…QTLVPPPAAD (67 aa). Low complexity predominate over residues 334 to 343; sequence TSRSPGSTLG. Position 337 is a phosphoserine (Ser337). Basic and acidic residues predominate over residues 359–373; sequence SSSRSERSSPQRDGL. Phosphoserine is present on Ser381.

It belongs to the G-protein coupled receptor 1 family.

It is found in the cell membrane. In terms of biological role, receptor for the lysosphingolipid sphingosine 1-phosphate (S1P). S1P is a bioactive lysophospholipid that elicits diverse physiological effect on most types of cells and tissues. Is coupled to both the G(i/O)alpha and G(12) subclass of heteromeric G-proteins. The protein is Sphingosine 1-phosphate receptor 5 (S1PR5) of Sus scrofa (Pig).